The following is a 559-amino-acid chain: Oxygen-dependent choline dehydrogenase (559 aa).

4 to 33 (DYIIIGAGSAGNVLAARLTEESDVSVLLLE) provides a ligand contact to FAD. The disordered stretch occupies residues 182–202 (EGFGPMDRTVTPKGRRASTAR). The Proton acceptor role is filled by His471.

It belongs to the GMC oxidoreductase family. FAD serves as cofactor.

The enzyme catalyses choline + A = betaine aldehyde + AH2. It catalyses the reaction betaine aldehyde + NAD(+) + H2O = glycine betaine + NADH + 2 H(+). Its pathway is amine and polyamine biosynthesis; betaine biosynthesis via choline pathway; betaine aldehyde from choline (cytochrome c reductase route): step 1/1. In terms of biological role, involved in the biosynthesis of the osmoprotectant glycine betaine. Catalyzes the oxidation of choline to betaine aldehyde and betaine aldehyde to glycine betaine at the same rate. This Pectobacterium atrosepticum (strain SCRI 1043 / ATCC BAA-672) (Erwinia carotovora subsp. atroseptica) protein is Oxygen-dependent choline dehydrogenase.